The following is a 253-amino-acid chain: 5-oxoprolinase subunit A (253 aa).

This sequence belongs to the LamB/PxpA family. As to quaternary structure, forms a complex composed of PxpA, PxpB and PxpC.

The enzyme catalyses 5-oxo-L-proline + ATP + 2 H2O = L-glutamate + ADP + phosphate + H(+). Catalyzes the cleavage of 5-oxoproline to form L-glutamate coupled to the hydrolysis of ATP to ADP and inorganic phosphate. This chain is 5-oxoprolinase subunit A, found in Syntrophobacter fumaroxidans (strain DSM 10017 / MPOB).